We begin with the raw amino-acid sequence, 468 residues long: 3-isopropylmalate dehydratase large subunit (468 aa).

The [4Fe-4S] cluster site is built by C347, C407, and C410.

The protein belongs to the aconitase/IPM isomerase family. LeuC type 1 subfamily. As to quaternary structure, heterodimer of LeuC and LeuD. It depends on [4Fe-4S] cluster as a cofactor.

The enzyme catalyses (2R,3S)-3-isopropylmalate = (2S)-2-isopropylmalate. The protein operates within amino-acid biosynthesis; L-leucine biosynthesis; L-leucine from 3-methyl-2-oxobutanoate: step 2/4. Catalyzes the isomerization between 2-isopropylmalate and 3-isopropylmalate, via the formation of 2-isopropylmaleate. The sequence is that of 3-isopropylmalate dehydratase large subunit from Synechocystis sp. (strain ATCC 27184 / PCC 6803 / Kazusa).